The sequence spans 843 residues: Pullulanase (843 aa).

An N-terminal signal peptide occupies residues 1-19 (MKTKLWLLLVLLLSALIFS). D535 (nucleophile) is an active-site residue. The Proton donor role is filled by E564.

Belongs to the glycosyl hydrolase 13 family.

It carries out the reaction Hydrolysis of (1-&gt;6)-alpha-D-glucosidic linkages in pullulan, amylopectin and glycogen, and in the alpha- and beta-limit dextrins of amylopectin and glycogen.. In Thermotoga maritima (strain ATCC 43589 / DSM 3109 / JCM 10099 / NBRC 100826 / MSB8), this protein is Pullulanase (pulA).